Consider the following 709-residue polypeptide: Polyribonucleotide nucleotidyltransferase (709 aa).

Residues D485 and D491 each coordinate Mg(2+). The region spanning 552-611 (PRIYTMKIDPKKIKDVIGKGGATIRSLTEETGTSIDIDDDGTVKIAAVDSNAAKNVMGRI) is the KH domain. An S1 motif domain is found at 621-689 (GAIYKGKVTR…RQGRIRLTMK (69 aa)).

It belongs to the polyribonucleotide nucleotidyltransferase family. In terms of assembly, component of the RNA degradosome, which is a multiprotein complex involved in RNA processing and mRNA degradation. It depends on Mg(2+) as a cofactor.

It localises to the cytoplasm. It carries out the reaction RNA(n+1) + phosphate = RNA(n) + a ribonucleoside 5'-diphosphate. Involved in mRNA degradation. Catalyzes the phosphorolysis of single-stranded polyribonucleotides processively in the 3'- to 5'-direction. This Haemophilus influenzae (strain PittEE) protein is Polyribonucleotide nucleotidyltransferase.